A 525-amino-acid polypeptide reads, in one-letter code: GMP synthase [glutamine-hydrolyzing] (525 aa).

Positions 9 to 207 constitute a Glutamine amidotransferase type-1 domain; sequence RILILDFGSQ…VRDICQCEAL (199 aa). Cys-86 serves as the catalytic Nucleophile. Active-site residues include His-181 and Glu-183. The region spanning 208-400 is the GMPS ATP-PPase domain; that stretch reads WTPAKIIDDA…LGLPYDMLYR (193 aa). Residue 235-241 participates in ATP binding; it reads SGGVDSS.

In terms of assembly, homodimer.

The catalysed reaction is XMP + L-glutamine + ATP + H2O = GMP + L-glutamate + AMP + diphosphate + 2 H(+). The protein operates within purine metabolism; GMP biosynthesis; GMP from XMP (L-Gln route): step 1/1. Functionally, catalyzes the synthesis of GMP from XMP. The chain is GMP synthase [glutamine-hydrolyzing] from Shigella dysenteriae serotype 1 (strain Sd197).